The chain runs to 529 residues: Tyrosine--tRNA ligase, cytoplasmic (529 aa).

Tyr39 contributes to the L-tyrosine binding site. A 'HIGH' region motif is present at residues 44–52 (TTGKPHVAY). L-tyrosine contacts are provided by Tyr166, Gln170, Asp173, and Gln188. Residues 222 to 226 (KMSSS) carry the 'KMSKS' region motif. A Nuclear localization signal motif is present at residues 242–247 (KKKLKK). The segment at 335–362 (KLTSSAYPEPSKNKGGVKGNPKQTTDDD) is disordered. The 105-residue stretch at 365–469 (IPSRLDIRVG…EGSAAGDRVY (105 aa)) folds into the tRNA-binding domain.

The protein belongs to the class-I aminoacyl-tRNA synthetase family. As to quaternary structure, homodimer.

It localises to the cytoplasm. Its subcellular location is the nucleus. It carries out the reaction tRNA(Tyr) + L-tyrosine + ATP = L-tyrosyl-tRNA(Tyr) + AMP + diphosphate + H(+). Its function is as follows. Catalyzes the attachment of tyrosine to tRNA(Tyr) in a two-step reaction: tyrosine is first activated by ATP to form Tyr-AMP and then transferred to the acceptor end of tRNA(Tyr). The protein is Tyrosine--tRNA ligase, cytoplasmic (yars1) of Danio rerio (Zebrafish).